The sequence spans 136 residues: Class I hydrophobin A (136 aa).

An N-terminal signal peptide occupies residues 1-16 (MRFALAITTLIAAVTA). Intrachain disulfides connect Cys39–Cys109, Cys47–Cys103, Cys48–Cys85, and Cys110–Cys128.

The protein belongs to the fungal hydrophobin family. As to expression, expressed in aerial conidia, in vitro blastospores, submerged conidia, and cells sporulating on chitin and insect cuticle, with hyd1 expression peaking in growing mycelia.

The protein resides in the secreted. The protein localises to the cell wall. It localises to the spore coat. It is found in the vacuole. Its subcellular location is the cytoplasmic vesicle. Functionally, aerial growth, conidiation, and dispersal of filamentous fungi in the environment rely upon a capability of their secreting small amphipathic proteins called hydrophobins (HPBs) with low sequence identity. Class I can self-assemble into an outermost layer of rodlet bundles on aerial cell surfaces, conferring cellular hydrophobicity that supports fungal growth, development and dispersal; whereas Class II form highly ordered films at water-air interfaces through intermolecular interactions but contribute nothing to the rodlet structure. Hyd1A contributes to certain cell wall-related features, such as hydrophobicity but is not involved in cell wall-related events during fungal proliferation in host hemocoel. Hyd1A and hyd1B coregulate the formation, morphology and orderly assembly of rodlet bundles required for conidial hydrophobicity and infectivity. Contributes to the spore coat rodlet layer. This is Class I hydrophobin A from Beauveria bassiana (strain ARSEF 2860) (White muscardine disease fungus).